A 76-amino-acid chain; its full sequence is U7-lycotoxin-Ls1b (76 aa).

The signal sequence occupies residues 1-22; sequence MKLISFTGLALLLIVSLIDVEA. The propeptide occupies 23–26; it reads QNEG.

It belongs to the neurotoxin 19 (CSTX) family. 07 (U7-Lctx) subfamily. Contains 4 disulfide bonds. As to expression, expressed by the venom gland.

The protein localises to the secreted. The protein is U7-lycotoxin-Ls1b of Lycosa singoriensis (Wolf spider).